Consider the following 258-residue polypeptide: Aspartate/glutamate leucyltransferase (258 aa).

It belongs to the R-transferase family. Bpt subfamily.

It localises to the cytoplasm. It carries out the reaction N-terminal L-glutamyl-[protein] + L-leucyl-tRNA(Leu) = N-terminal L-leucyl-L-glutamyl-[protein] + tRNA(Leu) + H(+). The catalysed reaction is N-terminal L-aspartyl-[protein] + L-leucyl-tRNA(Leu) = N-terminal L-leucyl-L-aspartyl-[protein] + tRNA(Leu) + H(+). In terms of biological role, functions in the N-end rule pathway of protein degradation where it conjugates Leu from its aminoacyl-tRNA to the N-termini of proteins containing an N-terminal aspartate or glutamate. This is Aspartate/glutamate leucyltransferase from Rhodopseudomonas palustris (strain BisA53).